We begin with the raw amino-acid sequence, 780 residues long: MATVDLEKLRMSGAGKAIGVLTSGGDAQGMNAAVRAVTRMGIYVGAKVFLIYEGYEGLVEGGENIKPANWLSVSNIIQLGGTIIGSARCKAFTTREGRLAAAYNLLQHGITNLCVIGGDGSLTGANIFRNEWGSLLEELVKEGKISESTAQNYAHLSIAGLVGSIDNDFCGTDMTIGTDSALHRIMEVIDAITTTAQSHQRTFVLEVMGRHCGYLALVSALASGADWLFIPEAPPEDGWENFMCERLGETRSRGSRLNIIIIAEGAIDRHGKPISSSYVKDLVVQRLGFDTRVTVLGHVQRGGTPSAFDRVLSSKMGMEAVMALLEATPDTPACVVSLSGNQSVRLPLMECVQVTKDVQKAMDEKRFDEAIQLRGRSFENNWKIYKLLAHQKVSKEKSNFSLAILNVGAPAAGMNAAVRSAVRTGISEGHTVYVVHDGFEGLAKGQVQEVGWHDVAGWLGRGGSMLGTKRTLPKPHLEAIVENLRTYNIHALLVIGGFEAYEGVLQLVEARGRYEELCIVMCVIPATISNNVPGTDFSLGSDTAVNAAMESCDRIKQSASGTKRRVFIVETMGGYCGYLATVTGIAVGADAAYVFEDPFNIHDLKANVEHMTEKMKTDIQRGLVLRNEKCHEHYTTEFLYNLYSSEGRGVFDCRTNVLGHLQQGGAPTPFDRNYGTKLGVKAMLWMSEKLRDVYRKGRVFANAPDSACVIGLRKKVVAFSSVTELKKETDFEHRMPREQWWLNLRLMLKMLAHYRISMADYVSGELEHVTRRTLSIDKGF.

Residue A2 is modified to N-acetylalanine. The tract at residues 2 to 390 (ATVDLEKLRM…NWKIYKLLAH (389 aa)) is N-terminal catalytic PFK domain 1. ATP is bound by residues G25, 88 to 89 (RC), and 118 to 121 (GDGS). D119 is a Mg(2+) binding site. Substrate-binding positions include 164–166 (SID), R201, 208–210 (MGR), E264, R292, and 298–301 (HVQR). D166 functions as the Proton acceptor in the catalytic mechanism. S377 carries the phosphoserine modification. Residues 391 to 400 (QKVSKEKSNF) form an interdomain linker region. The tract at residues 401-780 (SLAILNVGAP…RRTLSIDKGF (380 aa)) is C-terminal regulatory PFK domain 2. Beta-D-fructose 2,6-bisphosphate-binding positions include R470, 527 to 531 (TISNN), R565, 572 to 574 (MGG), and E628. S529 carries an O-linked (GlcNAc) serine glycan. Y640 bears the Phosphotyrosine mark. Residues R654, 660 to 663 (HLQQ), and R734 each bind beta-D-fructose 2,6-bisphosphate. Position 775 is a phosphoserine (S775).

Belongs to the phosphofructokinase type A (PFKA) family. ATP-dependent PFK group I subfamily. Eukaryotic two domain clade 'E' sub-subfamily. As to quaternary structure, homo- and heterotetramers. Phosphofructokinase (PFK) enzyme functions as a tetramer composed of different combinations of 3 types of subunits, called PFKM (M), PFKL (L) and PFKP (P). The composition of the PFK tetramer differs according to the tissue type it is present in. The kinetic and regulatory properties of the tetrameric enzyme are dependent on the subunit composition, hence can vary across tissues. It depends on Mg(2+) as a cofactor. GlcNAcylation at Ser-529 by OGT decreases enzyme activity, leading to redirect glucose flux through the oxidative pentose phosphate pathway. Glycosylation is stimulated by both hypoxia and glucose deprivation.

It localises to the cytoplasm. It catalyses the reaction beta-D-fructose 6-phosphate + ATP = beta-D-fructose 1,6-bisphosphate + ADP + H(+). It participates in carbohydrate degradation; glycolysis; D-glyceraldehyde 3-phosphate and glycerone phosphate from D-glucose: step 3/4. Allosterically activated by ADP, AMP, or fructose 2,6-bisphosphate, and allosterically inhibited by ATP or citrate. GlcNAcylation by OGT overcomes allosteric regulation. Catalyzes the phosphorylation of D-fructose 6-phosphate to fructose 1,6-bisphosphate by ATP, the first committing step of glycolysis. Negatively regulates the phagocyte oxidative burst in response to bacterial infection by controlling cellular NADPH biosynthesis and NADPH oxidase-derived reactive oxygen species. Upon macrophage activation, drives the metabolic switch toward glycolysis, thus preventing glucose turnover that produces NADPH via pentose phosphate pathway. The sequence is that of ATP-dependent 6-phosphofructokinase, liver type (Pfkl) from Rattus norvegicus (Rat).